Reading from the N-terminus, the 99-residue chain is MTSTMTQGLERIPDQMGYLVMSEDGGVLASAGDLENDERLAGVIREMVAVACSFRDLGDQQPFKRMSIVFGEHTFLVTISGQKIYVVKRQNVVREPISV.

It belongs to the LAMTOR4 family. In terms of assembly, part of the Ragulator complex composed of lamtor1, lamtor2, lamtor3, lamtor4 and lamtor5. The Ragulator complex interacts with slc38a9; the probable amino acid sensor. Component of the lysosomal folliculin complex (LFC).

It is found in the lysosome. Functionally, as part of the Ragulator complex it is involved in amino acid sensing and activation of mTORC1, a signaling complex promoting cell growth in response to growth factors, energy levels, and amino acids. Activated by amino acids through a mechanism involving the lysosomal V-ATPase, the Ragulator plays a dual role for the small GTPases Rag (RagA/RRAGA, RagB/RRAGB, RagC/RRAGC and/or RagD/RRAGD): it (1) acts as a guanine nucleotide exchange factor (GEF), activating the small GTPases Rag and (2) mediates recruitment of Rag GTPases to the lysosome membrane. Activated Ragulator and Rag GTPases function as a scaffold recruiting mTORC1 to lysosomes where it is in turn activated. The sequence is that of Ragulator complex protein LAMTOR4 (lamtor4) from Xenopus tropicalis (Western clawed frog).